The following is a 370-amino-acid chain: MTVDAVRVELGARAYEVRIGPGLIARAGAEIAPLLRRPKVAILTDETVAGLHLDPFRQALAEAGIASSALALPAGEATKGWPQFARAVEWLLEEKVERRDVVVALGGGVIGDLAGFAAAVLRRGVRFVQVPTTLLAQVDSSVGGKTGINTAQGKNLVGAFHQPSLVLADIGVLETLPPRDFRAGYGEVVKYGLLGDADFYEWLEEAGPRLAADTEARQRAVRRSVEMKAEIVARDETEEGDRALLNLGHTFCHALEKATGYSDRLLHGEGVAIGCALAFELSQRLGLCAQEAPSRLRAHLRAMGMKVDLRDIPGDLPSAEALLALMAQDKKVVDGKLRFILARGIGQAFVADDVPGDVVRTLLEDALAQR.

Residues 108–112 (GVIGD), 132–133 (TT), Lys-145, and Lys-154 contribute to the NAD(+) site. Zn(2+)-binding residues include Glu-187, His-249, and His-267.

Belongs to the sugar phosphate cyclases superfamily. Dehydroquinate synthase family. Requires Co(2+) as cofactor. Zn(2+) is required as a cofactor. NAD(+) serves as cofactor.

It is found in the cytoplasm. The enzyme catalyses 7-phospho-2-dehydro-3-deoxy-D-arabino-heptonate = 3-dehydroquinate + phosphate. Its pathway is metabolic intermediate biosynthesis; chorismate biosynthesis; chorismate from D-erythrose 4-phosphate and phosphoenolpyruvate: step 2/7. Functionally, catalyzes the conversion of 3-deoxy-D-arabino-heptulosonate 7-phosphate (DAHP) to dehydroquinate (DHQ). The chain is 3-dehydroquinate synthase from Cereibacter sphaeroides (strain ATCC 17029 / ATH 2.4.9) (Rhodobacter sphaeroides).